Here is a 389-residue protein sequence, read N- to C-terminus: Cobalt-precorrin-5B C(1)-methyltransferase (389 aa).

A disordered region spans residues 1–25 (MESRADHAVPADEGHGATEPPRGRD).

Belongs to the CbiD family.

It carries out the reaction Co-precorrin-5B + S-adenosyl-L-methionine = Co-precorrin-6A + S-adenosyl-L-homocysteine. The protein operates within cofactor biosynthesis; adenosylcobalamin biosynthesis; cob(II)yrinate a,c-diamide from sirohydrochlorin (anaerobic route): step 6/10. Catalyzes the methylation of C-1 in cobalt-precorrin-5B to form cobalt-precorrin-6A. The protein is Cobalt-precorrin-5B C(1)-methyltransferase of Nitratidesulfovibrio vulgaris (strain ATCC 29579 / DSM 644 / CCUG 34227 / NCIMB 8303 / VKM B-1760 / Hildenborough) (Desulfovibrio vulgaris).